The primary structure comprises 193 residues: Recombination protein RecR (193 aa).

Residues Cys61–Cys76 form a C4-type; degenerate zinc finger. In terms of domain architecture, Toprim spans Ser84–Pro170.

This sequence belongs to the RecR family.

Its function is as follows. May play a role in DNA repair. It seems to be involved in an RecBC-independent recombinational process of DNA repair. It may act with RecF and RecO. The sequence is that of Recombination protein RecR from Helicobacter pylori (strain J99 / ATCC 700824) (Campylobacter pylori J99).